Here is a 214-residue protein sequence, read N- to C-terminus: Eukaryotic translation initiation factor 4E-1B (214 aa).

MRNA contacts are provided by residues 53-54 (WQ), 99-100 (WE), 154-159 (RAKGDK), and 202-204 (TKS).

As to expression, ovary, muscle and testis.

The protein localises to the cytoplasm. It localises to the nucleus. Its function is as follows. Does not appear to be a mRNA-cap-binding protein. The protein is Eukaryotic translation initiation factor 4E-1B of Danio rerio (Zebrafish).